The primary structure comprises 613 residues: Dihydroxy-acid dehydratase (613 aa).

A Mg(2+)-binding site is contributed by Asp-81. [2Fe-2S] cluster is bound at residue Cys-122. The Mg(2+) site is built by Asp-123 and Lys-124. Residue Lys-124 is modified to N6-carboxylysine. Cys-195 is a [2Fe-2S] cluster binding site. Residue Glu-491 participates in Mg(2+) binding. Residue Ser-517 is the Proton acceptor of the active site.

Belongs to the IlvD/Edd family. In terms of assembly, homodimer. [2Fe-2S] cluster serves as cofactor. The cofactor is Mg(2+).

The enzyme catalyses (2R)-2,3-dihydroxy-3-methylbutanoate = 3-methyl-2-oxobutanoate + H2O. It carries out the reaction (2R,3R)-2,3-dihydroxy-3-methylpentanoate = (S)-3-methyl-2-oxopentanoate + H2O. It participates in amino-acid biosynthesis; L-isoleucine biosynthesis; L-isoleucine from 2-oxobutanoate: step 3/4. It functions in the pathway amino-acid biosynthesis; L-valine biosynthesis; L-valine from pyruvate: step 3/4. Its function is as follows. Functions in the biosynthesis of branched-chain amino acids. Catalyzes the dehydration of (2R,3R)-2,3-dihydroxy-3-methylpentanoate (2,3-dihydroxy-3-methylvalerate) into 2-oxo-3-methylpentanoate (2-oxo-3-methylvalerate) and of (2R)-2,3-dihydroxy-3-methylbutanoate (2,3-dihydroxyisovalerate) into 2-oxo-3-methylbutanoate (2-oxoisovalerate), the penultimate precursor to L-isoleucine and L-valine, respectively. This is Dihydroxy-acid dehydratase from Vibrio cholerae serotype O1 (strain ATCC 39541 / Classical Ogawa 395 / O395).